A 345-amino-acid chain; its full sequence is Histone H3-like centromeric protein cpar-1 (345 aa).

The interval 117-246 (NHSNRKPLEE…SRVTKTHNRK (130 aa)) is disordered. Basic and acidic residues predominate over residues 122 to 149 (KPLEESRRREEPRDRVHESNIDITHRGD). Basic residues predominate over residues 233-246 (RSGKSRVTKTHNRK). The H3-like stretch occupies residues 263 to 340 (STDMLIQKAP…TDIQLYRRLC (78 aa)).

This sequence belongs to the histone H3 family. In terms of assembly, forms a nucleosome-like histone octamer containing two molecules each of H2A, H2B, cpar-1 and H4 assembled in one cpar-1-H4 heterotetramer and two H2A-H2B heterodimers. Cleaved at the onset of meiotic anaphase I, likely by separase sep-1.

Its subcellular location is the nucleus. It is found in the chromosome. In terms of biological role, histone H3-like variant which exclusively replaces conventional H3 in the nucleosome core of centromeric chromatin at the inner plate of the kinetochore. Required for recruitment and assembly of kinetochore proteins, mitotic progression and chromosome segregation. May serve as an epigenetic mark that propagates centromere identity through replication and cell division. Not required for chromosome segregation during meiosis. The protein is Histone H3-like centromeric protein cpar-1 of Caenorhabditis briggsae.